Reading from the N-terminus, the 343-residue chain is D-beta-hydroxybutyrate dehydrogenase, mitochondrial (343 aa).

Residues 1–46 constitute a mitochondrion transit peptide; that stretch reads MLAARLSRPLSQLPGKALSVRDRENGTRHTLLFYPASFSPDTRRTY. Position 60–84 (60–84) interacts with NAD(+); that stretch reads ITGCDSGFGFSLAKHLHSKGFLVFA. An N6-acetyllysine mark is found at Lys73 and Lys97. Lys103 bears the N6-acetyllysine; alternate mark. An N6-succinyllysine; alternate modification is found at Lys103. An N6-acetyllysine mark is found at Lys132 and Lys177. Residue Met196 coordinates substrate. Cys209 serves as the catalytic Proton acceptor. Lys212 is modified (N6-acetyllysine). A glycan (O-linked (GlcNAc) serine) is linked at Ser219. Ser246 carries the post-translational modification Phosphoserine. Lys258 bears the N6-acetyllysine mark. Lys259 is modified (N6-acetyllysine; alternate). Residue Lys259 is modified to N6-succinyllysine; alternate. An N6-acetyllysine modification is found at Lys280.

The protein belongs to the short-chain dehydrogenases/reductases (SDR) family. In terms of assembly, homotetramer. Post-translationally, acetylation of Lys-132 is observed in liver mitochondria from fasted mice but not from fed mice.

The protein resides in the mitochondrion inner membrane. It localises to the mitochondrion matrix. The catalysed reaction is (R)-3-hydroxybutanoate + NAD(+) = acetoacetate + NADH + H(+). With respect to regulation, requires phosphatidylcholine as an allosteric activator for enzymatic activity. This is D-beta-hydroxybutyrate dehydrogenase, mitochondrial from Mus musculus (Mouse).